The primary structure comprises 139 residues: MQASELRFAPPSADKSALEEGRLFTPRFDANGLITAVVTDAGDGTLLMVAHMNAEALAKTLETGIAHYWSRSRSSLWKKGETSGNLQHVESISTDCDQDAVLLKVRVGGEGATCHTGRRSCFYRNVKVEDGRPILTENG.

D95 provides a ligand contact to Mg(2+). Residue C96 participates in Zn(2+) binding. Residues D97 and D99 each coordinate Mg(2+). C114 and C121 together coordinate Zn(2+).

This sequence belongs to the PRA-CH family. As to quaternary structure, homodimer. Mg(2+) is required as a cofactor. Requires Zn(2+) as cofactor.

It is found in the cytoplasm. It carries out the reaction 1-(5-phospho-beta-D-ribosyl)-5'-AMP + H2O = 1-(5-phospho-beta-D-ribosyl)-5-[(5-phospho-beta-D-ribosylamino)methylideneamino]imidazole-4-carboxamide. Its pathway is amino-acid biosynthesis; L-histidine biosynthesis; L-histidine from 5-phospho-alpha-D-ribose 1-diphosphate: step 3/9. Catalyzes the hydrolysis of the adenine ring of phosphoribosyl-AMP. This is Phosphoribosyl-AMP cyclohydrolase from Chelativorans sp. (strain BNC1).